The following is a 441-amino-acid chain: Inositol hexakisphosphate kinase 1 (441 aa).

The disordered stretch occupies residues 100–175 (ETVEQDDTTE…MLDGNSGLSS (76 aa)). A compositionally biased stretch (basic residues) spans 113–123 (PRRKHSRRSLH). Residues 137–149 (SLSLETSESSQEA) show a composition bias toward low complexity. Residues 150 to 160 (KSPKVELHSHS) show a composition bias toward basic and acidic residues. Phosphoserine is present on Ser-151. Position 220 to 228 (220 to 228 (PCVLDLKMG)) interacts with substrate. The segment at 370 to 392 (SSCGPSTSPSNTSPEAGPSSQPK) is disordered. Residues 372-391 (CGPSTSPSNTSPEAGPSSQP) are compositionally biased toward polar residues.

Belongs to the inositol phosphokinase (IPK) family.

Its subcellular location is the cytoplasm. It localises to the nucleus. The catalysed reaction is 1D-myo-inositol hexakisphosphate + ATP = 5-diphospho-1D-myo-inositol 1,2,3,4,6-pentakisphosphate + ADP. The enzyme catalyses 1-diphospho-1D-myo-inositol 2,3,4,5,6-pentakisphosphate + ATP + H(+) = 1,5-bis(diphospho)-1D-myo-inositol 2,3,4,6-tetrakisphosphate + ADP. Functionally, converts inositol hexakisphosphate (InsP6) to diphosphoinositol pentakisphosphate (InsP7/PP-InsP5). Converts 1,3,4,5,6-pentakisphosphate (InsP5) to PP-InsP4. The chain is Inositol hexakisphosphate kinase 1 (IP6K1) from Homo sapiens (Human).